The following is a 417-amino-acid chain: Histidine--tRNA ligase (417 aa).

It belongs to the class-II aminoacyl-tRNA synthetase family.

It localises to the cytoplasm. The catalysed reaction is tRNA(His) + L-histidine + ATP = L-histidyl-tRNA(His) + AMP + diphosphate + H(+). In Pyrobaculum neutrophilum (strain DSM 2338 / JCM 9278 / NBRC 100436 / V24Sta) (Thermoproteus neutrophilus), this protein is Histidine--tRNA ligase.